Reading from the N-terminus, the 1119-residue chain is Multiple epidermal growth factor-like domains protein 10 (1119 aa).

An N-terminal signal peptide occupies residues 1-22 (MMSSCGPLLLAVSCCLVALTSS). Topologically, residues 23-851 (LNLDDPNVCS…ALPMDSYQIG (829 aa)) are extracellular. Positions 27-104 (DPNVCSHWES…FYESGDICVP (78 aa)) constitute an EMI domain. Disulfide bonds link C31–C92, C57–C66, C91–C102, C102–C115, C106–C121, C123–C132, C145–C157, C151–C164, C166–C175, C188–C200, C194–C207, C209–C218, C231–C243, C237–C250, and C252–C260. 4 EGF-like domains span residues 98–133 (SGDI…ADCS), 141–176 (WGPH…WRCE), 184–219 (YGNN…AFCE), and 227–261 (HGQQ…MVCG). N-linked (GlcNAc...) asparagine glycosylation occurs at N197. N272 is a glycosylation site (N-linked (GlcNAc...) asparagine). 2 consecutive EGF-like domains span residues 274 to 304 (SQEC…ERCQ) and 312 to 347 (YGIG…ESCE). 6 cysteine pairs are disulfide-bonded: C277-C285, C279-C292, C294-C303, C316-C328, C322-C335, and C337-C346. N-linked (GlcNAc...) asparagine glycosylation is found at N369 and N393. 9 EGF-like domains span residues 401–436 (YGEA…SDCA), 444–479 (YGIN…VDCS), 487–522 (WGLG…DRCD), 573–608 (WGPN…TTCQ), 616–653 (FGHR…ALCN), 666–696 (GGSC…SDCS), 709–739 (IHTC…LYCT), 747–782 (YGKD…RHCE), and 795–825 (RQVC…TRCD). Intrachain disulfides connect C405–C417, C411–C424, and C426–C435. A glycan (N-linked (GlcNAc...) asparagine) is linked at N447. 6 cysteine pairs are disulfide-bonded: C448-C460, C454-C467, C469-C478, C491-C503, C497-C510, and C512-C521. A glycan (N-linked (GlcNAc...) asparagine) is linked at N492. N576 carries N-linked (GlcNAc...) asparagine glycosylation. 18 cysteine pairs are disulfide-bonded: C577–C589, C583–C596, C598–C607, C620–C634, C624–C641, C643–C652, C669–C677, C671–C684, C686–C695, C712–C720, C714–C727, C729–C738, C751–C763, C757–C770, C772–C781, C798–C806, C800–C813, and C815–C824. N-linked (GlcNAc...) asparagine glycosylation occurs at N674. N803 carries N-linked (GlcNAc...) asparagine glycosylation. A helical membrane pass occupies residues 852–872 (AITGIIILVLLVLILLLLFII). At 873–1119 (YRKKQKGKES…SSPSPTEDSK (247 aa)) the chain is on the cytoplasmic side.

Belongs to the MEGF family.

Its subcellular location is the cell membrane. Membrane receptor involved in phagocytosis by macrophages and astrocytes of apoptotic cells. Essential factor in the regulation of muscle development including myogenesis. Likely plays a key role in muscle cell proliferation, adhesion and motility. May control the balance between skeletal muscle satellite cells proliferation and differentiation through regulation of the notch signaling pathway. In Danio rerio (Zebrafish), this protein is Multiple epidermal growth factor-like domains protein 10.